We begin with the raw amino-acid sequence, 518 residues long: DNA-binding protein Ikaros (518 aa).

Residues 1 to 51 form a disordered region; the sequence is METDEAQDMSQVSGKESPPISDVPDDADEPMPVPEDLSTTTGGQQSVKNER. Residues 37–47 are compositionally biased toward polar residues; it reads LSTTTGGQQSV. 4 consecutive C2H2-type zinc fingers follow at residues 117–139, 145–167, 173–195, and 201–224; these read LKCD…NRSH, FQCN…IKLH, FKCH…LRTH, and HKCG…ERCH. A disordered region spans residues 381 to 405; that stretch reads SVSSERDASPSNSCQDSTDTESNNE. C2H2-type zinc fingers lie at residues 461–483 and 489–513; these read YKCE…MGCH and FECN…RGEH.

The protein belongs to the Ikaros C2H2-type zinc-finger protein family. As to expression, expressed in embryonic hematopoietic organs such as the bursa of Fabricius, thymus and spleen. In the adult, expressed in spleen, thymus, bursa and peripheral blood leukocytes.

It is found in the nucleus. Its function is as follows. Binds and activates the enhancer (delta-A element) of the CD3-delta gene. Functions in the specification and the maturation of the T-lymphocyte. Also interacts with a critical control element in the TDT (terminal deoxynucleotidyltransferase) promoter as well as with the promoters for other genes expressed during early stages of B- and T-cell development. Function is isoform-specific and is modulated by dominant-negative inactive isoforms. The chain is DNA-binding protein Ikaros (IKZF1) from Gallus gallus (Chicken).